We begin with the raw amino-acid sequence, 398 residues long: Phosphoglycerate kinase (398 aa).

Substrate-binding positions include 23–25 (DLN), arginine 38, 61–64 (HFGR), arginine 120, and arginine 153. ATP-binding positions include lysine 203, glutamate 325, and 355–358 (GGDT).

It belongs to the phosphoglycerate kinase family. In terms of assembly, monomer.

Its subcellular location is the cytoplasm. The enzyme catalyses (2R)-3-phosphoglycerate + ATP = (2R)-3-phospho-glyceroyl phosphate + ADP. It participates in carbohydrate degradation; glycolysis; pyruvate from D-glyceraldehyde 3-phosphate: step 2/5. This chain is Phosphoglycerate kinase, found in Chelativorans sp. (strain BNC1).